Reading from the N-terminus, the 403-residue chain is MFRLRAHGKKPITITTTTTTTASTFLYWSPESSPTALSSPTNLDPNIWSNLPNHLLEHILSLLPFKTLLTLRSISRHLRSLILSPSFISDHSFSLPSFLLLSHPQSFNSFPLFNPNLISWCTLPLPRSLSLTCASSLLSSSNGLLCFSLSPSSVSSLSIFNPLTRSSRSIKLPCYPFPFELLSLVTSPKGYKIFTLCSSSSAASSRSVCLYDSGDRSWRKFGGVDQVLPRGFNQDGVFYNGSLYFARSEPFLIVSVDLNDGKWTTATGDGVFPADDEITFARLVSDPEKKILYMVGGIGSNGICRSIKIWEFKEETESWIEVETLPDIVCRKFTSVCYHNYEHVYCLWHKEMICVCCYNWPEILFFHVGRRTWHWVPKCPSLPEKWSCGFRWFSFVPSLSASV.

Positions 45 to 91 constitute an F-box domain; that stretch reads PNIWSNLPNHLLEHILSLLPFKTLLTLRSISRHLRSLILSPSFISDH. Kelch repeat units lie at residues 91 to 140, 192 to 240, 291 to 339, and 343 to 393; these read HSFS…LLSS, KIFT…VFYN, ILYM…VCYH, and HVYC…FRWF.

The protein is F-box/kelch-repeat protein At5g43190 of Arabidopsis thaliana (Mouse-ear cress).